The primary structure comprises 627 residues: Phosphomethylpyrimidine synthase (627 aa).

A compositionally biased stretch (polar residues) spans 1–24 (MSATQKNNITRLEQLDRQSTQPFP). Positions 1 to 29 (MSATQKNNITRLEQLDRQSTQPFPNSRKV) are disordered. Substrate is bound by residues asparagine 231, methionine 260, tyrosine 289, histidine 325, 345–347 (SRG), 386–389 (DGLR), and glutamate 425. Histidine 429 contacts Zn(2+). Residue tyrosine 452 participates in substrate binding. Histidine 493 contacts Zn(2+). [4Fe-4S] cluster-binding residues include cysteine 573, cysteine 576, and cysteine 581.

It belongs to the ThiC family. Homodimer. It depends on [4Fe-4S] cluster as a cofactor.

It carries out the reaction 5-amino-1-(5-phospho-beta-D-ribosyl)imidazole + S-adenosyl-L-methionine = 4-amino-2-methyl-5-(phosphooxymethyl)pyrimidine + CO + 5'-deoxyadenosine + formate + L-methionine + 3 H(+). It functions in the pathway cofactor biosynthesis; thiamine diphosphate biosynthesis. Its function is as follows. Catalyzes the synthesis of the hydroxymethylpyrimidine phosphate (HMP-P) moiety of thiamine from aminoimidazole ribotide (AIR) in a radical S-adenosyl-L-methionine (SAM)-dependent reaction. This chain is Phosphomethylpyrimidine synthase, found in Pseudomonas aeruginosa (strain UCBPP-PA14).